We begin with the raw amino-acid sequence, 251 residues long: CCN family member 5 (251 aa).

The signal sequence occupies residues 1–23 (MRGNPLIHLLAISFLCILSMVYS). An IGFBP N-terminal domain is found at 24-103 (QLCPAPCACP…EEDDGSCEVN (80 aa)). Disulfide bonds link Cys26-Cys50, Cys30-Cys52, Cys32-Cys53, Cys39-Cys56, Cys64-Cys78, and Cys70-Cys100. The 67-residue stretch at 98-164 (GSCEVNGRRY…GRCCPEWVCD (67 aa)) folds into the VWFC domain. A TSP type-1 domain is found at 195-239 (CPNWSTAWGPCSTTCGLGIATRVSNQNRFCQLEIQRRLCLSRPCL). Asn197 carries an N-linked (GlcNAc...) asparagine glycan.

Belongs to the CCN family.

The protein resides in the secreted. Functionally, may play an important role in modulating bone turnover. Promotes the adhesion of osteoblast cells and inhibits the binding of fibrinogen to integrin receptors. In addition, inhibits osteocalcin production. The polypeptide is CCN family member 5 (Ccn5) (Mus musculus (Mouse)).